A 376-amino-acid polypeptide reads, in one-letter code: Biotin synthase (376 aa).

The Radical SAM core domain maps to 68-292 (NEVQISTLLS…IAVTRICCPS (225 aa)). [4Fe-4S] cluster-binding residues include Cys-83, Cys-87, and Cys-90. Residues Cys-129, Cys-160, Cys-220, and Arg-296 each coordinate [2Fe-2S] cluster.

It belongs to the radical SAM superfamily. Biotin synthase family. In terms of assembly, homodimer. Requires [4Fe-4S] cluster as cofactor. [2Fe-2S] cluster serves as cofactor.

The catalysed reaction is (4R,5S)-dethiobiotin + (sulfur carrier)-SH + 2 reduced [2Fe-2S]-[ferredoxin] + 2 S-adenosyl-L-methionine = (sulfur carrier)-H + biotin + 2 5'-deoxyadenosine + 2 L-methionine + 2 oxidized [2Fe-2S]-[ferredoxin]. Its pathway is cofactor biosynthesis; biotin biosynthesis; biotin from 7,8-diaminononanoate: step 2/2. Catalyzes the conversion of dethiobiotin (DTB) to biotin by the insertion of a sulfur atom into dethiobiotin via a radical-based mechanism. The polypeptide is Biotin synthase (Psychrobacter cryohalolentis (strain ATCC BAA-1226 / DSM 17306 / VKM B-2378 / K5)).